Here is a 680-residue protein sequence, read N- to C-terminus: uncharacterized protein (680 aa).

This sequence belongs to the HyuA family.

This is an uncharacterized protein from Methanocaldococcus jannaschii (strain ATCC 43067 / DSM 2661 / JAL-1 / JCM 10045 / NBRC 100440) (Methanococcus jannaschii).